Reading from the N-terminus, the 397-residue chain is Multidrug resistance protein MdtH (397 aa).

Helical transmembrane passes span 11 to 31 (WFLA…MPMI), 32 to 52 (SLRF…ALGL), 71 to 91 (FGAR…FASL), 94 to 114 (AQSG…GCLF), 137 to 157 (LLMM…SWLL), 163 to 183 (YVCL…LLIL), 211 to 231 (LVLI…IFPI), 242 to 262 (AVGW…YPLA), 291 to 311 (FANT…GIVI), 340 to 360 (LALG…YAML), and 366 to 386 (LPWL…VNCF).

This sequence belongs to the major facilitator superfamily. DHA1 family. MdtH (TC 2.A.1.2.21) subfamily.

The protein resides in the cell inner membrane. The polypeptide is Multidrug resistance protein MdtH (Aeromonas hydrophila subsp. hydrophila (strain ATCC 7966 / DSM 30187 / BCRC 13018 / CCUG 14551 / JCM 1027 / KCTC 2358 / NCIMB 9240 / NCTC 8049)).